Here is a 110-residue protein sequence, read N- to C-terminus: UPF0122 protein SH1678 (110 aa).

This sequence belongs to the UPF0122 family.

In terms of biological role, might take part in the signal recognition particle (SRP) pathway. This is inferred from the conservation of its genetic proximity to ftsY/ffh. May be a regulatory protein. The sequence is that of UPF0122 protein SH1678 from Staphylococcus haemolyticus (strain JCSC1435).